Consider the following 136-residue polypeptide: MSTAKLDDSTQRPLYGERIIKESKIICFENPNKKRIYEISIDLPEFTCKCPFSGYPDFAKLNIIYQPNLRVYELKSLKLYINNFRDIKISHEEVVNRIMDDLLSAGSPHWIHLNASFNPRGNVSMQLDIFSGQKKN.

Cysteine 50 functions as the Thioimide intermediate in the catalytic mechanism. Aspartate 57 functions as the Proton donor in the catalytic mechanism. Substrate is bound by residues 72–74 (YEL) and 91–92 (HE).

The protein belongs to the GTP cyclohydrolase I family. QueF type 1 subfamily.

Its subcellular location is the cytoplasm. It catalyses the reaction 7-aminomethyl-7-carbaguanine + 2 NADP(+) = 7-cyano-7-deazaguanine + 2 NADPH + 3 H(+). It functions in the pathway tRNA modification; tRNA-queuosine biosynthesis. Its function is as follows. Catalyzes the NADPH-dependent reduction of 7-cyano-7-deazaguanine (preQ0) to 7-aminomethyl-7-deazaguanine (preQ1). In Prochlorococcus marinus (strain MIT 9215), this protein is NADPH-dependent 7-cyano-7-deazaguanine reductase.